A 164-amino-acid polypeptide reads, in one-letter code: Transcription antitermination protein NusB (164 aa).

Positions 144–164 (KNGRGLIDHTPPRAAKTDAKS) are disordered. Residues 149 to 164 (LIDHTPPRAAKTDAKS) are compositionally biased toward basic and acidic residues.

Belongs to the NusB family.

In terms of biological role, involved in transcription antitermination. Required for transcription of ribosomal RNA (rRNA) genes. Binds specifically to the boxA antiterminator sequence of the ribosomal RNA (rrn) operons. The protein is Transcription antitermination protein NusB of Chlorobium phaeovibrioides (strain DSM 265 / 1930) (Prosthecochloris vibrioformis (strain DSM 265)).